The following is a 451-amino-acid chain: Adenylyltransferase and sulfurtransferase MOCS3-1 (451 aa).

Positions 42-62 (GEDSDEAEESSNDMPTPQTKL) are disordered. Residues 43–52 (EDSDEAEESS) show a composition bias toward acidic residues. Residue Thr-60 is modified to Phosphothreonine. ATP-binding positions include Gly-99, Asp-120, 127–131 (SNLHR), Lys-144, and 188–189 (DN). Cys-229 and Cys-232 together coordinate Zn(2+). Cys-246 serves as the catalytic Glycyl thioester intermediate; for adenylyltransferase activity. The Zn(2+) site is built by Cys-304 and Cys-307. The 97-residue stretch at 353–449 (QSQPHLLLDV…WTGSVDATFP (97 aa)) folds into the Rhodanese domain. Cys-408 (cysteine persulfide intermediate; for sulfurtransferase activity) is an active-site residue.

It in the N-terminal section; belongs to the HesA/MoeB/ThiF family. UBA4 subfamily. Zn(2+) serves as cofactor.

It is found in the cytoplasm. It catalyses the reaction [molybdopterin-synthase sulfur-carrier protein]-C-terminal Gly-Gly + ATP + H(+) = [molybdopterin-synthase sulfur-carrier protein]-C-terminal Gly-Gly-AMP + diphosphate. It carries out the reaction [molybdopterin-synthase sulfur-carrier protein]-C-terminal Gly-Gly-AMP + S-sulfanyl-L-cysteinyl-[cysteine desulfurase] + AH2 = [molybdopterin-synthase sulfur-carrier protein]-C-terminal-Gly-aminoethanethioate + L-cysteinyl-[cysteine desulfurase] + A + AMP + 2 H(+). The protein operates within tRNA modification; 5-methoxycarbonylmethyl-2-thiouridine-tRNA biosynthesis. It functions in the pathway cofactor biosynthesis; molybdopterin biosynthesis. Plays a central role in 2-thiolation of mcm(5)S(2)U at tRNA wobble positions of cytosolic tRNA(Lys), tRNA(Glu) and tRNA(Gln). Also essential during biosynthesis of the molybdenum cofactor. Acts by mediating the C-terminal thiocarboxylation of sulfur carriers URM1 and MOCS2A. Its N-terminus first activates URM1 and MOCS2A as acyl-adenylates (-COAMP), then the persulfide sulfur on the catalytic cysteine is transferred to URM1 and MOCS2A to form thiocarboxylation (-COSH) of their C-terminus. The reaction probably involves hydrogen sulfide that is generated from the persulfide intermediate and that acts as a nucleophile towards URM1 and MOCS2A. Subsequently, a transient disulfide bond is formed. Does not use thiosulfate as sulfur donor; NFS1 probably acting as a sulfur donor for thiocarboxylation reactions. This is Adenylyltransferase and sulfurtransferase MOCS3-1 from Drosophila pseudoobscura pseudoobscura (Fruit fly).